The following is a 155-amino-acid chain: S-ribosylhomocysteine lyase (155 aa).

Fe cation contacts are provided by His-58, His-62, and Cys-125.

This sequence belongs to the LuxS family. In terms of assembly, homodimer. It depends on Fe cation as a cofactor.

It carries out the reaction S-(5-deoxy-D-ribos-5-yl)-L-homocysteine = (S)-4,5-dihydroxypentane-2,3-dione + L-homocysteine. Involved in the synthesis of autoinducer 2 (AI-2) which is secreted by bacteria and is used to communicate both the cell density and the metabolic potential of the environment. The regulation of gene expression in response to changes in cell density is called quorum sensing. Catalyzes the transformation of S-ribosylhomocysteine (RHC) to homocysteine (HC) and 4,5-dihydroxy-2,3-pentadione (DPD). This is S-ribosylhomocysteine lyase from Helicobacter pylori (strain P12).